A 135-amino-acid polypeptide reads, in one-letter code: Large ribosomal subunit protein uL16m (135 aa).

It belongs to the universal ribosomal protein uL16 family.

The protein resides in the mitochondrion. The sequence is that of Large ribosomal subunit protein uL16m (RPL16) from Marchantia polymorpha (Common liverwort).